A 94-amino-acid polypeptide reads, in one-letter code: MRAGFSDFQLIRDQVLFLQDQAQRLTEWLQLSGFENPVSESTTLCLREREKRIPTCVAVCVPSPGTVHTALLHPTTLSQSRSSSEAKMLIIHTA.

In terms of tissue distribution, found in lung alveolar cells type I and II, as well as alveolar macrophages (at protein level). Detected also in testis and kidney. Expressed by different tissues of the ocular system like cornea, conjuctiva, lacrimal gland, eyelid and efferent tear ducts (at protein level). From these tissues is secreted into the tear film (at protein level).

Its subcellular location is the cytoplasm. It is found in the secreted. Its function is as follows. Putative surfactant protein. May be involved in wound healing and in the reduction of the surface tension at the ocular surface. In Homo sapiens (Human), this protein is Surfactant-associated protein 3 (SFTA3).